A 50-amino-acid chain; its full sequence is Small ribosomal subunit protein uS14 (50 aa).

Zn(2+)-binding residues include cysteine 15, cysteine 18, cysteine 33, and cysteine 36.

This sequence belongs to the universal ribosomal protein uS14 family. Zinc-binding uS14 subfamily. As to quaternary structure, part of the 30S ribosomal subunit. Zn(2+) is required as a cofactor.

Functionally, binds 16S rRNA, required for the assembly of 30S particles. The protein is Small ribosomal subunit protein uS14 of Methanothermobacter thermautotrophicus (strain ATCC 29096 / DSM 1053 / JCM 10044 / NBRC 100330 / Delta H) (Methanobacterium thermoautotrophicum).